The primary structure comprises 492 residues: N-succinylglutamate 5-semialdehyde dehydrogenase (492 aa).

Gly-220–Gly-225 provides a ligand contact to NAD(+). Catalysis depends on residues Glu-243 and Cys-277.

This sequence belongs to the aldehyde dehydrogenase family. AstD subfamily.

It catalyses the reaction N-succinyl-L-glutamate 5-semialdehyde + NAD(+) + H2O = N-succinyl-L-glutamate + NADH + 2 H(+). It functions in the pathway amino-acid degradation; L-arginine degradation via AST pathway; L-glutamate and succinate from L-arginine: step 4/5. Functionally, catalyzes the NAD-dependent reduction of succinylglutamate semialdehyde into succinylglutamate. The sequence is that of N-succinylglutamate 5-semialdehyde dehydrogenase from Escherichia coli (strain UTI89 / UPEC).